The sequence spans 768 residues: Putative calcium up-regulated protein H (768 aa).

Residues 1 to 22 (MINIEDISKSSNQSEEKQLKST) form a disordered region. 2 consecutive Ricin B-type lectin domains span residues 25–145 (KPKY…WTTF) and 116–248 (QGNG…WGIN).

Belongs to the cup family.

It localises to the cytoplasm. It is found in the membrane. Functionally, may play an important role in stabilizing and/or regulating the cell membrane during Ca(2+) stress or certain stages of development. The protein is Putative calcium up-regulated protein H (cupH) of Dictyostelium discoideum (Social amoeba).